Here is a 192-residue protein sequence, read N- to C-terminus: Ribosomal RNA large subunit methyltransferase E (192 aa).

Residues glycine 46, tryptophan 48, aspartate 63, aspartate 79, and aspartate 102 each coordinate S-adenosyl-L-methionine. The active-site Proton acceptor is lysine 142.

Belongs to the class I-like SAM-binding methyltransferase superfamily. RNA methyltransferase RlmE family.

It localises to the cytoplasm. It carries out the reaction uridine(2552) in 23S rRNA + S-adenosyl-L-methionine = 2'-O-methyluridine(2552) in 23S rRNA + S-adenosyl-L-homocysteine + H(+). Its function is as follows. Specifically methylates the uridine in position 2552 of 23S rRNA at the 2'-O position of the ribose in the fully assembled 50S ribosomal subunit. The protein is Ribosomal RNA large subunit methyltransferase E of Wolbachia pipientis wMel.